Consider the following 122-residue polypeptide: Large ribosomal subunit protein uL14 (122 aa).

The protein belongs to the universal ribosomal protein uL14 family. Part of the 50S ribosomal subunit. Forms a cluster with proteins L3 and L19. In the 70S ribosome, L14 and L19 interact and together make contacts with the 16S rRNA in bridges B5 and B8.

In terms of biological role, binds to 23S rRNA. Forms part of two intersubunit bridges in the 70S ribosome. The protein is Large ribosomal subunit protein uL14 of Geobacillus thermodenitrificans (strain NG80-2).